Consider the following 279-residue polypeptide: Sulfur carrier protein FdhD (279 aa).

The active-site Cysteine persulfide intermediate is Cys-122.

The protein belongs to the FdhD family.

The protein localises to the cytoplasm. In terms of biological role, required for formate dehydrogenase (FDH) activity. Acts as a sulfur carrier protein that transfers sulfur from IscS to the molybdenum cofactor prior to its insertion into FDH. This Thermoplasma volcanium (strain ATCC 51530 / DSM 4299 / JCM 9571 / NBRC 15438 / GSS1) protein is Sulfur carrier protein FdhD.